We begin with the raw amino-acid sequence, 1192 residues long: Plakophilin-4 (1192 aa).

The tract at residues 1-31 (MPAPEQASLVEEGQPQTRQEAASTGPGMEPE) is disordered. Residues 36 to 70 (TILASVKEQELQFQRLTRELEVERQIVASQLERCR) are a coiled coil. A disordered region spans residues 73–262 (AESPSIASTS…PRPLNPSAYS (190 aa)). The residue at position 75 (serine 75) is a Phosphoserine. Polar residues predominate over residues 77–86 (SIASTSSTEK). Threonine 84 carries the phosphothreonine modification. Serine 106, serine 132, serine 136, and serine 139 each carry phosphoserine. Polar residues-rich tracts occupy residues 138–156 (GSLG…SDSG), 163–204 (FHNS…QPSV), and 214–230 (SVPS…STGV). Serine 221, serine 231, and serine 236 each carry phosphoserine. Positions 231 to 242 (SPSRGSLRTSLG) are enriched in low complexity. Omega-N-methylarginine is present on residues arginine 254 and arginine 270. Residues serine 273 and serine 281 each carry the phosphoserine modification. The interval 290–310 (SVTSRQTSNPNGPTPQYQTTA) is disordered. Residues serine 314, serine 327, and serine 337 each carry the phosphoserine modification. The segment at 323–348 (TRVASPSQGQVGSSSPKRSGMTAVPQ) is disordered. Residues 325–338 (VASPSQGQVGSSSP) show a composition bias toward low complexity. Tyrosine 372 bears the Phosphotyrosine mark. 3 positions are modified to phosphoserine: serine 392, serine 403, and serine 406. Residue threonine 412 is modified to Phosphothreonine. Position 415 is a phosphotyrosine (tyrosine 415). The ARM 1 repeat unit spans residues 415-455 (YEGRTYYSPVYRSPNHGTVELQGSQTALYRTGSVGIGNLQR). 3 positions are modified to phosphoserine: serine 422, serine 427, and serine 438. Phosphotyrosine is present on tyrosine 478. 3 positions are modified to phosphoserine: serine 510, serine 512, and serine 515. ARM repeat units lie at residues 518–557 (KDPR…HLCF), 560–599 (NKVK…NLVF), 604–644 (DENK…NLSS), 660–702 (LTNT…NLSS), and 706–751 (EARK…NLSY). Over residues 773–782 (GKESPSKDSE) the composition is skewed to basic and acidic residues. The disordered stretch occupies residues 773 to 810 (GKESPSKDSEPSCWGKKKKKKKRTPQEDQWDGVGPIPG). The residue at position 776 (serine 776) is a Phosphoserine. 3 ARM repeats span residues 815 to 855 (PKGV…NLSA), 862 to 901 (AYIR…NMAL), and 950 to 993 (MENA…TLWQ). 2 positions are modified to phosphothreonine: threonine 1013 and threonine 1017. Residue serine 1045 is modified to Phosphoserine. The interval 1058-1086 (PRSEYDRTQPPMQYYNSQGDATHKGLYPG) is disordered. Polar residues predominate over residues 1067 to 1077 (PPMQYYNSQGD). Phosphoserine occurs at positions 1091, 1100, and 1135.

Belongs to the beta-catenin family. As to quaternary structure, interacts with PDZD2. Interacts (via the C-terminus) with FRMPD2 (via the PDZ 2 domain). Interacts with RHOA; the interaction is detected at the midbody. Interacts with ECT2; the interaction is detected at the midbody. Interacts with CCDC85B. As to expression, expressed in salivary glands (at protein level). Expressed in arrector pili muscle (at protein level).

The protein resides in the cell junction. It is found in the desmosome. It localises to the cytoplasm. Its subcellular location is the cytoskeleton. The protein localises to the spindle. The protein resides in the midbody. It is found in the cell membrane. Its function is as follows. Plays a role as a regulator of Rho activity during cytokinesis. May play a role in junctional plaques. This chain is Plakophilin-4 (PKP4), found in Homo sapiens (Human).